Reading from the N-terminus, the 502-residue chain is Lysine--tRNA ligase (502 aa).

Positions 413 and 420 each coordinate Mg(2+).

This sequence belongs to the class-II aminoacyl-tRNA synthetase family. Homodimer. Mg(2+) serves as cofactor.

The protein localises to the cytoplasm. It carries out the reaction tRNA(Lys) + L-lysine + ATP = L-lysyl-tRNA(Lys) + AMP + diphosphate. The chain is Lysine--tRNA ligase from Haemophilus influenzae (strain 86-028NP).